A 150-amino-acid chain; its full sequence is Urease subunit beta (150 aa).

Positions 122–140 (GAVVGDSPAATPGTTGATG) are enriched in low complexity. A disordered region spans residues 122 to 150 (GAVVGDSPAATPGTTGATGDLPGYLGEGS).

Belongs to the urease beta subunit family. In terms of assembly, heterotrimer of UreA (gamma), UreB (beta) and UreC (alpha) subunits. Three heterotrimers associate to form the active enzyme.

The protein localises to the cytoplasm. It catalyses the reaction urea + 2 H2O + H(+) = hydrogencarbonate + 2 NH4(+). It functions in the pathway nitrogen metabolism; urea degradation; CO(2) and NH(3) from urea (urease route): step 1/1. The sequence is that of Urease subunit beta from Frankia alni (strain DSM 45986 / CECT 9034 / ACN14a).